Reading from the N-terminus, the 280-residue chain is Chemotaxis protein methyltransferase 2 (280 aa).

In terms of domain architecture, CheR-type methyltransferase spans 10–280 (FGNQEFHYTR…SVGQTVYSPA (271 aa)). Residues asparagine 85, threonine 87, arginine 91, glutamate 125, aspartate 150, 208-209 (NL), and 226-227 (RN) each bind S-adenosyl-L-methionine.

Interacts with the C-terminal pentapeptide GWEEF of the methyl-accepting chemotaxis protein McpB.

The enzyme catalyses L-glutamyl-[protein] + S-adenosyl-L-methionine = [protein]-L-glutamate 5-O-methyl ester + S-adenosyl-L-homocysteine. Functionally, methylation of the methyl-accepting chemotaxis proteins (MCP) to form gamma-glutamyl methyl ester residues in MCP. It specifically targets the McpB chemoreceptor. The protein is Chemotaxis protein methyltransferase 2 of Pseudomonas aeruginosa (strain ATCC 15692 / DSM 22644 / CIP 104116 / JCM 14847 / LMG 12228 / 1C / PRS 101 / PAO1).